A 365-amino-acid polypeptide reads, in one-letter code: UDP-N-acetylglucosamine--N-acetylmuramyl-(pentapeptide) pyrophosphoryl-undecaprenol N-acetylglucosamine transferase (365 aa).

Residues T10–G12, N128, R170, S199, I250, and Q295 contribute to the UDP-N-acetyl-alpha-D-glucosamine site.

It belongs to the glycosyltransferase 28 family. MurG subfamily.

Its subcellular location is the cell inner membrane. The enzyme catalyses di-trans,octa-cis-undecaprenyl diphospho-N-acetyl-alpha-D-muramoyl-L-alanyl-D-glutamyl-meso-2,6-diaminopimeloyl-D-alanyl-D-alanine + UDP-N-acetyl-alpha-D-glucosamine = di-trans,octa-cis-undecaprenyl diphospho-[N-acetyl-alpha-D-glucosaminyl-(1-&gt;4)]-N-acetyl-alpha-D-muramoyl-L-alanyl-D-glutamyl-meso-2,6-diaminopimeloyl-D-alanyl-D-alanine + UDP + H(+). It functions in the pathway cell wall biogenesis; peptidoglycan biosynthesis. Cell wall formation. Catalyzes the transfer of a GlcNAc subunit on undecaprenyl-pyrophosphoryl-MurNAc-pentapeptide (lipid intermediate I) to form undecaprenyl-pyrophosphoryl-MurNAc-(pentapeptide)GlcNAc (lipid intermediate II). This Prosthecochloris aestuarii (strain DSM 271 / SK 413) protein is UDP-N-acetylglucosamine--N-acetylmuramyl-(pentapeptide) pyrophosphoryl-undecaprenol N-acetylglucosamine transferase.